The primary structure comprises 157 residues: Crossover junction endodeoxyribonuclease RuvC (157 aa).

Residues Asp-7, Glu-67, and Asp-139 contribute to the active site. Residues Asp-7, Glu-67, and Asp-139 each contribute to the Mg(2+) site.

Belongs to the RuvC family. As to quaternary structure, homodimer which binds Holliday junction (HJ) DNA. The HJ becomes 2-fold symmetrical on binding to RuvC with unstacked arms; it has a different conformation from HJ DNA in complex with RuvA. In the full resolvosome a probable DNA-RuvA(4)-RuvB(12)-RuvC(2) complex forms which resolves the HJ. It depends on Mg(2+) as a cofactor.

The protein resides in the cytoplasm. It carries out the reaction Endonucleolytic cleavage at a junction such as a reciprocal single-stranded crossover between two homologous DNA duplexes (Holliday junction).. In terms of biological role, the RuvA-RuvB-RuvC complex processes Holliday junction (HJ) DNA during genetic recombination and DNA repair. Endonuclease that resolves HJ intermediates. Cleaves cruciform DNA by making single-stranded nicks across the HJ at symmetrical positions within the homologous arms, yielding a 5'-phosphate and a 3'-hydroxyl group; requires a central core of homology in the junction. The consensus cleavage sequence is 5'-(A/T)TT(C/G)-3'. Cleavage occurs on the 3'-side of the TT dinucleotide at the point of strand exchange. HJ branch migration catalyzed by RuvA-RuvB allows RuvC to scan DNA until it finds its consensus sequence, where it cleaves and resolves the cruciform DNA. The protein is Crossover junction endodeoxyribonuclease RuvC of Prochlorococcus marinus (strain MIT 9312).